Consider the following 1430-residue polypeptide: 3'-5' RNA helicase YTHDC2 (1430 aa).

Residues 1–37 (MSRPSSVSPRQPAPGGGGGGGPSPCGPGGGGRAKGLK) are disordered. Residues 14–33 (PGGGGGGGPSPCGPGGGGRA) show a composition bias toward gly residues. The region spanning 38–106 (DIRIDEEVKI…NRYLTVKKKD (69 aa)) is the R3H domain. The Helicase ATP-binding domain maps to 203 to 369 (VKIIKENKVV…FGSCPVIYIQ (167 aa)). 216–223 (GETGSGKT) is an ATP binding site. Positions 316 to 319 (DEVH) match the DEAH box motif. ANK repeat units lie at residues 506–538 (TSAT…SKAS) and 539–571 (NGWM…FGNL). Residues 612-784 (LLYNICHSCD…ELCLHTKLLA (173 aa)) form the Helicase C-terminal domain. Residues S1089, S1090, and S1092 each carry the phosphoserine modification. Residues 1164–1174 (EQSAGLQQPSG) are compositionally biased toward polar residues. The segment at 1164–1288 (EQSAGLQQPS…SPSPRPNMPV (125 aa)) is disordered. The segment covering 1191 to 1200 (SSWRSNNSRK) has biased composition (low complexity). At S1202 the chain carries Phosphoserine. Positions 1231–1249 (KYKDRGILHPKRGTEDRSD) are enriched in basic and acidic residues. Residues 1250–1264 (QSSLKSTDSSSYPSP) are compositionally biased toward low complexity. Residues S1263, S1267, and S1281 each carry the phosphoserine modification. In terms of domain architecture, YTH spans 1288–1418 (VRYFIMKSSN…LVGEQLLQLW (131 aa)). RNA is bound by residues 1294–1296 (KSS), W1310, and W1360.

This sequence belongs to the DEAD box helicase family. DEAH subfamily. In terms of assembly, interacts with MEIOC; binds transcripts that regulate the mitotic cell cycle inhibiting progression into metaphase, thereby allowing meiotic prophase to proceed normally. Interacts (via ANK repeats) with XRN1. Interacts with ZCCHC4. Associates with the small ribosomal subunit. Interacts with RBM46. Expressed in testis. Not detected in spermatogonia next to the tubule wall but is strongly expressed in spermatocytes, suggesting that it is up-regulated in germ cells upon entry into meiosis.

Its subcellular location is the cytoplasm. It localises to the perinuclear region. It carries out the reaction ATP + H2O = ADP + phosphate + H(+). Functionally, 3'-5' RNA helicase that plays a key role in the male and female germline by promoting transition from mitotic to meiotic divisions in stem cells. Specifically recognizes and binds N6-methyladenosine (m6A)-containing RNAs, a modification present at internal sites of mRNAs and some non-coding RNAs that plays a role in the efficiency of RNA processing and stability. Essential for ensuring a successful progression of the meiotic program in the germline by regulating the level of m6A-containing RNAs. Acts by binding and promoting degradation of m6A-containing mRNAs: the 3'-5' RNA helicase activity is required for this process and RNA degradation may be mediated by XRN1 exoribonuclease. Required for both spermatogenesis and oogenesis. This chain is 3'-5' RNA helicase YTHDC2, found in Homo sapiens (Human).